The primary structure comprises 270 residues: uncharacterized protein (270 aa).

The N-terminal stretch at 1–22 (MEYIKKIALYMSVLLLIIFIGG) is a signal peptide. Cys23 carries N-palmitoyl cysteine lipidation. Cys23 is lipidated: S-diacylglycerol cysteine.

This sequence belongs to the staphylococcal tandem lipoprotein family.

It is found in the cell membrane. This is an uncharacterized protein from Staphylococcus aureus (strain MW2).